The sequence spans 464 residues: Serine/threonine-protein kinase 38-like (464 aa).

Residue alanine 2 is modified to N-acetylalanine. Residues 64–89 (KLRRSQHARKETEFLRLKRTRLGLDD) form an S100B binding region. A Phosphothreonine modification is found at threonine 75. The Protein kinase domain occupies 90 to 383 (FESLKVIGRG…VEEIKGHPFF (294 aa)). Residues 96 to 104 (IGRGAFGEV) and lysine 119 each bind ATP. Catalysis depends on aspartate 213, which acts as the Proton acceptor. Serine 282 carries the phosphoserine; by autocatalysis modification. An AGC-kinase C-terminal domain is found at 384–453 (EGVDWGHIRE…KRFEGLTQRG (70 aa)). Residue threonine 442 is modified to Phosphothreonine; by STK24/MST3.

Belongs to the protein kinase superfamily. AGC Ser/Thr protein kinase family. As to quaternary structure, homodimeric S100B binds two molecules of STK38L. Interacts with MOB1 and MOB2. Interacts with MICAL1; leading to inhibit the protein kinase activity by antagonizing activation by MST1/STK4. Mg(2+) is required as a cofactor. Highly expressed in the large and small intestine, stomach and testis. High levels also present in the brain, in particular the neurocortex, basal forebrain, hippocampus, the amygdala, cerebellum and brainstem.

It is found in the cytoplasm. The protein localises to the cytoskeleton. It localises to the membrane. It catalyses the reaction L-seryl-[protein] + ATP = O-phospho-L-seryl-[protein] + ADP + H(+). The catalysed reaction is L-threonyl-[protein] + ATP = O-phospho-L-threonyl-[protein] + ADP + H(+). With respect to regulation, activated by binding of S100B which releases autoinhibitory N-lobe interactions, enabling ATP to bind and the autophosphorylation of Ser-282. Thr-442 then undergoes calcium-dependent phosphorylation by STK24/MST3. Interactions between phosphorylated Thr-442 and the N-lobe promote additional structural changes that complete the activation of the kinase. Autoinhibition is also released by the binding of MOB1/MOBKL1A and MOB2 to the N-terminal of STK38L. Its function is as follows. Involved in the regulation of structural processes in differentiating and mature neuronal cells. This is Serine/threonine-protein kinase 38-like from Mus musculus (Mouse).